The following is a 202-amino-acid chain: MADVTPSRTGQVSRKTNETAVSVALDVEGTGSSKIVTGVGFFDHMLDQLSRHSLIDMDIKAEGDLHVDDHHTVEDTGIAIGQALAKALGDRRGITRYASIDLAMDETMTRAAVDVSGRPFLVWNVAFTAPKIGTFDTELVREFFQALAQHAGITLHVQNIYGANNHHIAETCFKSVARVLRTATEIDPRQAGRVPSTKGTLA.

It belongs to the imidazoleglycerol-phosphate dehydratase family.

The protein resides in the cytoplasm. The enzyme catalyses D-erythro-1-(imidazol-4-yl)glycerol 3-phosphate = 3-(imidazol-4-yl)-2-oxopropyl phosphate + H2O. It participates in amino-acid biosynthesis; L-histidine biosynthesis; L-histidine from 5-phospho-alpha-D-ribose 1-diphosphate: step 6/9. The chain is Imidazoleglycerol-phosphate dehydratase from Sinorhizobium medicae (strain WSM419) (Ensifer medicae).